A 202-amino-acid polypeptide reads, in one-letter code: Holliday junction branch migration complex subunit RuvA (202 aa).

Positions 1-64 are domain I; it reads MIGRLRGSLA…EDAHLLYGFY (64 aa). The interval 65-143 is domain II; sequence EKRERELFRE…AWEALPGTFT (79 aa). Positions 144–153 are flexible linker; it reads LVSNGPNQAE. Residues 154-202 are domain III; it reads PVASAESDAVSALISLGYKPQEASKAVSAIKEKDLSSADLIRRALKGMG.

This sequence belongs to the RuvA family. In terms of assembly, homotetramer. Forms an RuvA(8)-RuvB(12)-Holliday junction (HJ) complex. HJ DNA is sandwiched between 2 RuvA tetramers; dsDNA enters through RuvA and exits via RuvB. An RuvB hexamer assembles on each DNA strand where it exits the tetramer. Each RuvB hexamer is contacted by two RuvA subunits (via domain III) on 2 adjacent RuvB subunits; this complex drives branch migration. In the full resolvosome a probable DNA-RuvA(4)-RuvB(12)-RuvC(2) complex forms which resolves the HJ.

Its subcellular location is the cytoplasm. The RuvA-RuvB-RuvC complex processes Holliday junction (HJ) DNA during genetic recombination and DNA repair, while the RuvA-RuvB complex plays an important role in the rescue of blocked DNA replication forks via replication fork reversal (RFR). RuvA specifically binds to HJ cruciform DNA, conferring on it an open structure. The RuvB hexamer acts as an ATP-dependent pump, pulling dsDNA into and through the RuvAB complex. HJ branch migration allows RuvC to scan DNA until it finds its consensus sequence, where it cleaves and resolves the cruciform DNA. The protein is Holliday junction branch migration complex subunit RuvA of Pseudomonas syringae pv. syringae (strain B728a).